The chain runs to 714 residues: Calpain-1 catalytic subunit (714 aa).

The region spanning 55 to 354 is the Calpain catalytic domain; the sequence is LFRDEAFPPV…FTRLEICNLT (300 aa). Residues glutamine 109 and aspartate 114 each coordinate Ca(2+). Residues cysteine 115, histidine 272, and asparagine 296 contribute to the active site. Asparagine 316, aspartate 318, and aspartate 323 together coordinate Ca(2+). At threonine 354 the chain carries Phosphothreonine. The interval 355 to 526 is domain III; sequence PDALKSRTIR…KSAGTAELDD (172 aa). Residues 527–542 are linker; it reads QIQANLPDEQVLSEEE. 4 EF-hand domains span residues 541 to 576, 585 to 618, 615 to 650, and 680 to 714; these read EEID…IISK, FSLE…NRIR, NRIR…AGFK, and VRLE…TMFA. The interval 543-713 is domain IV; sequence IDENFKALFR…LFKWLQLTMF (171 aa). Ca(2+) is bound by residues aspartate 598, aspartate 600, asparagine 602, lysine 604, glutamate 609, aspartate 628, aspartate 630, serine 632, serine 634, and glutamate 639.

This sequence belongs to the peptidase C2 family. As to quaternary structure, forms a heterodimer with a small (regulatory) subunit CAPNS1. Ca(2+) is required as a cofactor. In terms of processing, undergoes calcium-induced successive autoproteolytic cleavages that generate a membrane-bound 78 kDa active form and an intracellular 75 kDa active form. Calpastatin reduces with high efficiency the transition from 78 kDa to 75 kDa calpain forms.

The protein localises to the cytoplasm. It is found in the cell membrane. It carries out the reaction Broad endopeptidase specificity.. Activated by micromolar concentrations of calcium and inhibited by calpastatin. In terms of biological role, calcium-regulated non-lysosomal thiol-protease which catalyzes limited proteolysis of substrates involved in cytoskeletal remodeling and signal transduction. Proteolytically cleaves CTBP1. Cleaves and activates caspase-7 (CASP7). The sequence is that of Calpain-1 catalytic subunit from Pongo abelii (Sumatran orangutan).